Reading from the N-terminus, the 175-residue chain is MSCKLKVKGQYIKDLSFENPNSPQIFLMISKTPPEINISINVSSVSLPVKAQDQSSEQPSDNKVEPLYEVTLQVNAEARVGTTVAFICEIKYCGVFSIESDDVSIEELSQQDIRDVLLISAPTILFPFVRELISRVTSTGGFPPLMLDIVDFRAMYESQMKQGVGQNDNSQDPEK.

The protein belongs to the SecB family. As to quaternary structure, homotetramer, a dimer of dimers. One homotetramer interacts with 1 SecA dimer.

Its subcellular location is the cytoplasm. One of the proteins required for the normal export of preproteins out of the cell cytoplasm. It is a molecular chaperone that binds to a subset of precursor proteins, maintaining them in a translocation-competent state. It also specifically binds to its receptor SecA. The polypeptide is Protein-export protein SecB (Ehrlichia chaffeensis (strain ATCC CRL-10679 / Arkansas)).